Reading from the N-terminus, the 679-residue chain is Protein CASP (679 aa).

The Cytoplasmic segment spans residues 1–614 (MDTSVYSHAL…VILQNKMTRM (614 aa)). 2 coiled-coil regions span residues 14 to 90 (AKAD…EKVL) and 178 to 341 (RNWK…NYSD). Phosphoserine is present on Ser364. Residues 385–444 (ANKKLQATLAEYRSKSTAQEEERNELKKSVDQLKQQIATLKEANEKLETDLEKVENVSPH) are a coiled coil. Phosphoserine occurs at positions 450 and 453. The stretch at 492 to 540 (IVTKQRDRFRSRNMDLEKQLRQGNSEKGKLKLEISKLKGDNTKLYERIR) forms a coiled coil. Ser555 carries the phosphoserine modification. The chain crosses the membrane as a helical; Anchor for type IV membrane protein span at residues 615–635 (VFLFYCIGLHGLVFMMSMYVI). The Lumenal segment spans residues 636–679 (NISGYMTPEVGIVQSAKSSSNLNGGLGGAEKVAAGVGSVHGINR).

Belongs to the CASP family.

It localises to the golgi apparatus membrane. In terms of biological role, may be involved in intra-Golgi transport. The polypeptide is Protein CASP (COY1) (Saccharomyces cerevisiae (strain ATCC 204508 / S288c) (Baker's yeast)).